The sequence spans 338 residues: 1-aminocyclopropane-1-carboxylate deaminase (338 aa).

Lysine 51 carries the N6-(pyridoxal phosphate)lysine modification. The active-site Nucleophile is serine 78.

It belongs to the ACC deaminase/D-cysteine desulfhydrase family. As to quaternary structure, homotrimer. Pyridoxal 5'-phosphate serves as cofactor.

The enzyme catalyses 1-aminocyclopropane-1-carboxylate + H2O = 2-oxobutanoate + NH4(+). Its function is as follows. Catalyzes a cyclopropane ring-opening reaction, the irreversible conversion of 1-aminocyclopropane-1-carboxylate (ACC) to ammonia and alpha-ketobutyrate. Allows growth on ACC as a nitrogen source. This chain is 1-aminocyclopropane-1-carboxylate deaminase, found in Pseudomonas syringae pv. syringae (strain B728a).